A 104-amino-acid polypeptide reads, in one-letter code: MSTYAIIKTGGKQVKVEVDQAIYVEKLDVEAGAEVTFDQVVLVGGDKTVVGTPIVQGATVVGTVEKQGKQKKVVTYKYKPKKGSHRKQGHRQPYTKVVIKAINA.

Belongs to the bacterial ribosomal protein bL21 family. As to quaternary structure, part of the 50S ribosomal subunit. Contacts protein L20.

Functionally, this protein binds to 23S rRNA in the presence of protein L20. The polypeptide is Large ribosomal subunit protein bL21 (Streptococcus mutans serotype c (strain ATCC 700610 / UA159)).